A 253-amino-acid polypeptide reads, in one-letter code: Acetylglutamate kinase (253 aa).

Substrate contacts are provided by residues 37-38, R59, and N149; that span reads GG.

Belongs to the acetylglutamate kinase family. ArgB subfamily.

The protein localises to the cytoplasm. It catalyses the reaction N-acetyl-L-glutamate + ATP = N-acetyl-L-glutamyl 5-phosphate + ADP. It functions in the pathway amino-acid biosynthesis; L-arginine biosynthesis; N(2)-acetyl-L-ornithine from L-glutamate: step 2/4. Its function is as follows. Catalyzes the ATP-dependent phosphorylation of N-acetyl-L-glutamate. This chain is Acetylglutamate kinase, found in Rubrobacter xylanophilus (strain DSM 9941 / JCM 11954 / NBRC 16129 / PRD-1).